We begin with the raw amino-acid sequence, 378 residues long: uncharacterized protein (378 aa).

Zn(2+)-binding residues include C38, H60, C90, C93, C96, and C104.

It belongs to the zinc-containing alcohol dehydrogenase family. Class-III subfamily. Zn(2+) serves as cofactor.

This is an uncharacterized protein from Bacillus subtilis (strain 168).